The primary structure comprises 873 residues: Bifunctional uridylyltransferase/uridylyl-removing enzyme (873 aa).

The segment at 1 to 332 (MKYLSPLSLS…HQGEQDDAII (332 aa)) is uridylyltransferase. The tract at residues 333–692 (IDDDFQRRGR…ISKNASRGGT (360 aa)) is uridylyl-removing. The HD domain maps to 451–573 (VDEHSIRLLK…VRDEERLDYL (123 aa)). ACT domains are found at residues 693–777 (EIFV…RPPR) and 800–873 (LMEF…RLSS).

This sequence belongs to the GlnD family. The cofactor is Mg(2+).

It catalyses the reaction [protein-PII]-L-tyrosine + UTP = [protein-PII]-uridylyl-L-tyrosine + diphosphate. The enzyme catalyses [protein-PII]-uridylyl-L-tyrosine + H2O = [protein-PII]-L-tyrosine + UMP + H(+). Its activity is regulated as follows. Uridylyltransferase (UTase) activity is inhibited by glutamine, while glutamine activates uridylyl-removing (UR) activity. In terms of biological role, modifies, by uridylylation and deuridylylation, the PII regulatory proteins (GlnB and homologs), in response to the nitrogen status of the cell that GlnD senses through the glutamine level. Under low glutamine levels, catalyzes the conversion of the PII proteins and UTP to PII-UMP and PPi, while under higher glutamine levels, GlnD hydrolyzes PII-UMP to PII and UMP (deuridylylation). Thus, controls uridylylation state and activity of the PII proteins, and plays an important role in the regulation of nitrogen assimilation and metabolism. This is Bifunctional uridylyltransferase/uridylyl-removing enzyme from Aliivibrio fischeri (strain ATCC 700601 / ES114) (Vibrio fischeri).